A 109-amino-acid polypeptide reads, in one-letter code: Protein FAM32A-like (109 aa).

The interval 1–48 (MSEYKSVQKGSLKLKGVSLPSKKKKKKNKEMKRLEEQVLTSENEEGTK) is disordered. Low complexity predominate over residues 9-20 (KGSLKLKGVSLP). Positions 21 to 30 (SKKKKKKNKE) are enriched in basic residues.

The protein belongs to the FAM32 family.

The protein resides in the nucleus. Functionally, may induce G2 arrest and apoptosis. May also increase cell sensitivity to apoptotic stimuli. The protein is Protein FAM32A-like (fam32al) of Danio rerio (Zebrafish).